The chain runs to 461 residues: Threonine/serine transporter ThrP (461 aa).

12 consecutive transmembrane segments (helical) span residues 17–37 (IELI…AAST), 40–60 (WAGP…FFIM), 97–117 (WFMW…YVQF), 123–143 (AQWI…LAAV), 156–176 (IKVT…FFGF), 201–221 (GFLT…LIGI), 244–264 (ILIF…WNEI), 278–298 (IGIT…ALSG), 333–353 (VAGV…NYII), 360–380 (FVYV…VILI), 401–421 (IMFP…LIGM), and 430–450 (SLFV…VFGL).

Belongs to the amino acid-polyamine-organocation (APC) superfamily.

The protein localises to the cell inner membrane. It catalyses the reaction L-threonine(in) + H(+)(in) = L-threonine(out) + H(+)(out). The catalysed reaction is L-serine(in) + H(+)(in) = L-serine(out) + H(+)(out). In terms of biological role, permease that mediates the proton-dependent threonine and serine uptake. The protein is Threonine/serine transporter ThrP of Salmonella typhi.